The following is a 747-amino-acid chain: Fatty acid oxidation complex subunit alpha (747 aa).

Positions 1–197 (MGASATNSVT…KMGLVDDVVP (197 aa)) are enoyl-CoA hydratase. The 3-hydroxyacyl-CoA dehydrogenase stretch occupies residues 313-747 (RAIHRVGVLG…NIDEVTDVAS (435 aa)). Positions 590 to 614 (YLYSNPTKNSSPTKNGNSPAKRNSF) are disordered. Residues 593–610 (SNPTKNSSPTKNGNSPAK) are compositionally biased toward polar residues.

This sequence in the N-terminal section; belongs to the enoyl-CoA hydratase/isomerase family. The protein in the central section; belongs to the 3-hydroxyacyl-CoA dehydrogenase family. As to quaternary structure, heterotetramer of two alpha chains (FadJ) and two beta chains (FadI).

The protein localises to the cytoplasm. The catalysed reaction is a (3S)-3-hydroxyacyl-CoA = a (2E)-enoyl-CoA + H2O. The enzyme catalyses a 4-saturated-(3S)-3-hydroxyacyl-CoA = a (3E)-enoyl-CoA + H2O. It carries out the reaction a (3S)-3-hydroxyacyl-CoA + NAD(+) = a 3-oxoacyl-CoA + NADH + H(+). It catalyses the reaction (3S)-3-hydroxybutanoyl-CoA = (3R)-3-hydroxybutanoyl-CoA. The protein operates within lipid metabolism; fatty acid beta-oxidation. In terms of biological role, catalyzes the formation of a hydroxyacyl-CoA by addition of water on enoyl-CoA. Also exhibits 3-hydroxyacyl-CoA epimerase and 3-hydroxyacyl-CoA dehydrogenase activities. In Yersinia pseudotuberculosis serotype O:1b (strain IP 31758), this protein is Fatty acid oxidation complex subunit alpha.